A 102-amino-acid polypeptide reads, in one-letter code: MSDQEAKPSSEDLGDKKDGGDYIKLKVIGQDSSEIHFKVKMTTHLKKLKESYRQRQGVPMNSLRFLFEGQRISDHQTPKELGMEEEDVIEVYQEQTGGHSTF.

Residues 1-20 (MSDQEAKPSSEDLGDKKDGG) are disordered. In terms of domain architecture, Ubiquitin-like spans 21–98 (DYIKLKVIGQ…IEVYQEQTGG (78 aa)). A Glycyl lysine isopeptide (Gly-Lys) (interchain with K-? in acceptor proteins) cross-link involves residue G98. Residues 99–102 (HSTF) constitute a propeptide that is removed on maturation.

It belongs to the ubiquitin family. SUMO subfamily. Interacts with sae2, ube2i, ranbp2, pias1 and pias2. Covalently attached to a number of proteins including rangap1 and ranbp2. Interacts with sox9 and sox10. In terms of processing, cleavage of precursor form by a sentrin-specific protease is necessary for function.

Its subcellular location is the nucleus membrane. The protein resides in the nucleus speckle. The protein localises to the cytoplasm. It localises to the nucleus. It is found in the PML body. Its subcellular location is the cell membrane. Its function is as follows. Ubiquitin-like protein that can be covalently attached to proteins as a monomer or a lysine-linked polymer. Covalent attachment via an isopeptide bond to its substrates requires prior activation by the E1 complex sae1-sae2 and linkage to the E2 enzyme ube2i. This post-translational modification on lysine residues of proteins plays a crucial role in a number of cellular processes such as nuclear transport, DNA replication and repair, mitosis and signal transduction. Polymeric sumo1 chains are also susceptible to polyubiquitination which functions as a signal for proteasomal degradation of modified proteins. This is Small ubiquitin-related modifier 1-A (sumo1-a) from Xenopus laevis (African clawed frog).